The primary structure comprises 848 residues: Beta-galactosidase 11 (848 aa).

The N-terminal stretch at 1-23 (MSAAAVLAVVAAAVAALAAAASG) is a signal peptide. The N-linked (GlcNAc...) asparagine glycan is linked to N29. The active-site Proton donor is E189. Catalysis depends on E260, which acts as the Nucleophile. N-linked (GlcNAc...) asparagine glycans are attached at residues N261, N472, and N783. In terms of domain architecture, SUEL-type lectin spans 750–837 (GGLKPTAVLS…GTLAVQAKCS (88 aa)).

This sequence belongs to the glycosyl hydrolase 35 family.

Its subcellular location is the secreted. The protein localises to the extracellular space. It is found in the apoplast. The catalysed reaction is Hydrolysis of terminal non-reducing beta-D-galactose residues in beta-D-galactosides.. This chain is Beta-galactosidase 11, found in Oryza sativa subsp. japonica (Rice).